Here is a 620-residue protein sequence, read N- to C-terminus: Carotenoid isomerooxygenase (620 aa).

Residues histidine 211, histidine 267, and histidine 337 each contribute to the Fe cation site. The disordered stretch occupies residues 440–459 (NGKQATAGEESPKRDAKRGR). The segment covering 449–459 (ESPKRDAKRGR) has biased composition (basic and acidic residues). Histidine 612 serves as a coordination point for Fe cation.

It belongs to the carotenoid oxygenase family. Fe(2+) serves as cofactor. Expression follows organogenesis of the larval Bolwig's organ (BO), which mediates larval photophobic behavior. In the adult, expression is restricted exclusively to the brain. Expressed in both neuronal cells and glia cells. Not active within photoreceptors. Active within neuronal cells within the central nervous system.

The enzyme catalyses all-trans-zeaxanthin + O2 = (3R)-11-cis-3-hydroxyretinal + (3R)-all-trans-3-hydroxyretinal. It functions in the pathway cofactor metabolism; retinol metabolism. In terms of biological role, catalyzes the oxidative cleavage at the 15,15'-double bond of carotenoids and the simultaneous all-trans to 11-cis isomerization of one cleavage product. Carotenoids like 11-cis retinal can promote visual pigment biogenesis in the dark. Essential for the biosynthesis of the 3-hydroxyretinal chromophore of rhodopsin from zeaxanthin and for proper photoreceptor development. Also essential for larval light perception. The sequence is that of Carotenoid isomerooxygenase (ninaB) from Drosophila melanogaster (Fruit fly).